A 161-amino-acid chain; its full sequence is Large ribosomal subunit protein uL15 (161 aa).

The tract at residues 1–50 is disordered; it reads MKLSDIADNAGSRKKRMRIGRGIGSGKGKTGGRGGKGQTARSGVRINGFE. Gly residues predominate over residues 21-37; it reads RGIGSGKGKTGGRGGKG.

This sequence belongs to the universal ribosomal protein uL15 family. In terms of assembly, part of the 50S ribosomal subunit.

Its function is as follows. Binds to the 23S rRNA. The sequence is that of Large ribosomal subunit protein uL15 from Nitrobacter winogradskyi (strain ATCC 25391 / DSM 10237 / CIP 104748 / NCIMB 11846 / Nb-255).